Reading from the N-terminus, the 505-residue chain is Gap junction alpha-10 protein (505 aa).

At 1–16 (MGDWNLLGGILEEVHS) the chain is on the cytoplasmic side. The chain crosses the membrane as a helical span at residues 17-37 (HSTIVGKIWLTILFIFRMLVL). Residues 38-76 (GVAAEDVWDDEQSAFACNTQQPGCNNICYDDAFPISLIR) lie on the Extracellular side of the membrane. The helical transmembrane segment at 77–97 (FWVLQIIFVSSPSLVYMGHAL) threads the bilayer. Residues 98–165 (YRLRDFEKQR…TYVLHILTRS (68 aa)) lie on the Cytoplasmic side of the membrane. The chain crosses the membrane as a helical span at residues 166 to 186 (VLEVGFMIGQYILYGFQMHPI). The Extracellular portion of the chain corresponds to 187-209 (YKCTQAPCPNSVDCFVSRPTEKT). A helical transmembrane segment spans residues 210–230 (IFMLFMHSIAAISLLLNILEI). Over 231–505 (FHLGIRKIMR…IIHETYVYVY (275 aa)) the chain is Cytoplasmic. A compositionally biased stretch (polar residues) spans 371–383 (TMTASQHRPSSAL). Residues 371–491 (TMTASQHRPS…SKSSHVDSPP (121 aa)) are disordered. Residues 437-446 (MSEKGQRHSD) are compositionally biased toward basic and acidic residues. Low complexity predominate over residues 447 to 460 (SGSSRSLNSSCLDF).

This sequence belongs to the connexin family. Alpha-type (group II) subfamily. A connexon is composed of a hexamer of connexins. As to expression, low levels were detected in skin, heart, kidney, testis, ovary, intestine. Expression not detected in brain, sciatic nerve or liver. According to PubMed:15147297 expression is detected only in horizontal cells in the inner nuclear layer of the retina and not in other neurons of the central nervous system or tissues. Detected in the outer plexiform layer of the retina (at protein level).

It localises to the cell membrane. It is found in the cell junction. Its subcellular location is the gap junction. In terms of biological role, one gap junction consists of a cluster of closely packed pairs of transmembrane channels, the connexons, through which materials of low MW diffuse from one cell to a neighboring cell. Involved in tracer coupling between horizontal cells of the retina. May play a role in the regulation of horizontal cell patterning. In Mus musculus (Mouse), this protein is Gap junction alpha-10 protein (Gja10).